The primary structure comprises 174 residues: Ribosome maturation factor RimM (174 aa).

Residues 98–171 (EDEFYFHEII…KIKIHVMEGL (74 aa)) enclose the PRC barrel domain.

It belongs to the RimM family. In terms of assembly, binds ribosomal protein uS19.

Its subcellular location is the cytoplasm. Functionally, an accessory protein needed during the final step in the assembly of 30S ribosomal subunit, possibly for assembly of the head region. Essential for efficient processing of 16S rRNA. May be needed both before and after RbfA during the maturation of 16S rRNA. It has affinity for free ribosomal 30S subunits but not for 70S ribosomes. The chain is Ribosome maturation factor RimM from Bacillus velezensis (strain DSM 23117 / BGSC 10A6 / LMG 26770 / FZB42) (Bacillus amyloliquefaciens subsp. plantarum).